Here is an 883-residue protein sequence, read N- to C-terminus: Putative pentatricopeptide repeat-containing protein At1g13800 (883 aa).

PPR repeat units lie at residues 145–180 (LIRVSTALVKAYANLDMFDEAIDIFFRAYYSLGRAP), 181–215 (DIKALNFLISRMIASGRSDMVVGFFWEIERLGLDA), 216–251 (DAHTYVLVVQALWRNDDKEELEKLLSRLLISETRNP), 253–285 (VFYLNFIEGLCLNQMTDIAYFLLQPLRDANILV), 290–324 (LGIAYRKVVRGLCYEMRIEDAESVVLDMEKHGIDP), 325–359 (DVYVYSAIIEGHRKNMNIPKAVDVFNKMLKKRKRI), 360–394 (NCVIVSSILQCYCQMGNFSEAYDLFKEFRETNISL), 395–429 (DRVCYNVAFDALGKLGKVEEAIELFREMTGKGIAP), 430–464 (DVINYTTLIGGCCLQGKCSDAFDLMIEMDGTGKTP), 465–499 (DIVIYNVLAGGLATNGLAQEAFETLKMMENRGVKP), 500–534 (TYVTHNMVIEGLIDAGELDKAEAFYESLEHKSREN), 537–561 (SMVKGFCAAGCLDHAFERFIRLEFP), 563–598 (PKSVYFTLFTSLCAEKDYISKAQDLLDRMWKLGVEP), 599–633 (EKSMYGKLIGAWCRVNNVRKAREFFEILVTKKIVP), 634–668 (DLFTYTIMINTYCRLNEPKQAYALFEDMKRRDVKP), 697–731 (DVVYYTIMINRYCHLNDLKKVYALFKDMKRREIVP), 760–794 (DVFYYTVLIDWQCKIGDLGEAKRIFDQMIESGVDP), 795–829 (DAAPYTALIACCCKMGYLKEAKMIFDRMIESGVKP), and 830–864 (DVVPYTALIAGCCRNGFVLKAVKLVKEMLEKGIKP).

Belongs to the PPR family. P subfamily.

This chain is Putative pentatricopeptide repeat-containing protein At1g13800, found in Arabidopsis thaliana (Mouse-ear cress).